Reading from the N-terminus, the 130-residue chain is Holo-[acyl-carrier-protein] synthase (130 aa).

Mg(2+) is bound by residues aspartate 9 and glutamate 58.

This sequence belongs to the P-Pant transferase superfamily. AcpS family. The cofactor is Mg(2+).

Its subcellular location is the cytoplasm. The enzyme catalyses apo-[ACP] + CoA = holo-[ACP] + adenosine 3',5'-bisphosphate + H(+). Its function is as follows. Transfers the 4'-phosphopantetheine moiety from coenzyme A to a Ser of acyl-carrier-protein. This is Holo-[acyl-carrier-protein] synthase from Mycolicibacterium smegmatis (strain ATCC 700084 / mc(2)155) (Mycobacterium smegmatis).